The following is a 363-amino-acid chain: Holliday junction branch migration complex subunit RuvB (363 aa).

The tract at residues 1-32 (MSDVERTEFEIPGGIPPRRNGGQGRAADTNVD) is disordered. The large ATPase domain (RuvB-L) stretch occupies residues 27–207 (ADTNVDANLK…FGFTAQMEFY (181 aa)). ATP is bound by residues leucine 46, arginine 47, glycine 88, lysine 91, threonine 92, threonine 93, 154 to 156 (EDF), arginine 197, tyrosine 207, and arginine 244. Threonine 92 serves as a coordination point for Mg(2+). A small ATPAse domain (RuvB-S) region spans residues 208–278 (DVPDLTKVVK…AANAALIVFD (71 aa)). Positions 281 to 363 (EVGLDRLDRA…EPPEGTIGDY (83 aa)) are head domain (RuvB-H). DNA-binding residues include arginine 336 and arginine 341.

The protein belongs to the RuvB family. As to quaternary structure, homohexamer. Forms an RuvA(8)-RuvB(12)-Holliday junction (HJ) complex. HJ DNA is sandwiched between 2 RuvA tetramers; dsDNA enters through RuvA and exits via RuvB. An RuvB hexamer assembles on each DNA strand where it exits the tetramer. Each RuvB hexamer is contacted by two RuvA subunits (via domain III) on 2 adjacent RuvB subunits; this complex drives branch migration. In the full resolvosome a probable DNA-RuvA(4)-RuvB(12)-RuvC(2) complex forms which resolves the HJ.

It is found in the cytoplasm. The catalysed reaction is ATP + H2O = ADP + phosphate + H(+). Functionally, the RuvA-RuvB-RuvC complex processes Holliday junction (HJ) DNA during genetic recombination and DNA repair, while the RuvA-RuvB complex plays an important role in the rescue of blocked DNA replication forks via replication fork reversal (RFR). RuvA specifically binds to HJ cruciform DNA, conferring on it an open structure. The RuvB hexamer acts as an ATP-dependent pump, pulling dsDNA into and through the RuvAB complex. RuvB forms 2 homohexamers on either side of HJ DNA bound by 1 or 2 RuvA tetramers; 4 subunits per hexamer contact DNA at a time. Coordinated motions by a converter formed by DNA-disengaged RuvB subunits stimulates ATP hydrolysis and nucleotide exchange. Immobilization of the converter enables RuvB to convert the ATP-contained energy into a lever motion, pulling 2 nucleotides of DNA out of the RuvA tetramer per ATP hydrolyzed, thus driving DNA branch migration. The RuvB motors rotate together with the DNA substrate, which together with the progressing nucleotide cycle form the mechanistic basis for DNA recombination by continuous HJ branch migration. Branch migration allows RuvC to scan DNA until it finds its consensus sequence, where it cleaves and resolves cruciform DNA. This chain is Holliday junction branch migration complex subunit RuvB, found in Corynebacterium glutamicum (strain R).